Reading from the N-terminus, the 271-residue chain is ATP synthase subunit delta (271 aa).

The protein belongs to the ATPase delta chain family. F-type ATPases have 2 components, F(1) - the catalytic core - and F(0) - the membrane proton channel. F(1) has five subunits: alpha(3), beta(3), gamma(1), delta(1), epsilon(1). F(0) has three main subunits: a(1), b(2) and c(10-14). The alpha and beta chains form an alternating ring which encloses part of the gamma chain. F(1) is attached to F(0) by a central stalk formed by the gamma and epsilon chains, while a peripheral stalk is formed by the delta and b chains.

The protein localises to the cell membrane. F(1)F(0) ATP synthase produces ATP from ADP in the presence of a proton or sodium gradient. F-type ATPases consist of two structural domains, F(1) containing the extramembraneous catalytic core and F(0) containing the membrane proton channel, linked together by a central stalk and a peripheral stalk. During catalysis, ATP synthesis in the catalytic domain of F(1) is coupled via a rotary mechanism of the central stalk subunits to proton translocation. In terms of biological role, this protein is part of the stalk that links CF(0) to CF(1). It either transmits conformational changes from CF(0) to CF(1) or is implicated in proton conduction. The chain is ATP synthase subunit delta from Corynebacterium glutamicum (strain R).